Consider the following 475-residue polypeptide: Amino acid permease 8 (475 aa).

Positions 1–22 (MDAYNNPSAVESGDAAVKSVDD) are disordered. Topologically, residues 1 to 31 (MDAYNNPSAVESGDAAVKSVDDDGREKRTGT) are cytoplasmic. 2 consecutive transmembrane segments (helical) span residues 32 to 52 (FWTA…LSLA) and 53 to 73 (WAIA…FAII). At 74 to 120 (TYYTSTLLADCYRSPDSITGTRNYNYMGVVRSYLGGKKVQLCGVAQY) the chain is on the cytoplasmic side. Residues 121–141 (VNLVGVTIGYTITASISLVAI) traverse the membrane as a helical segment. The Extracellular portion of the chain corresponds to 142–157 (GKSNCYHDKGHKAKCS). A helical membrane pass occupies residues 158 to 178 (VSNYPYMAAFGIVQIILSQLP). The Cytoplasmic portion of the chain corresponds to 179-185 (NFHKLSF). Residues 186 to 206 (LSIIAAVMSFSYASIGIGLAI) traverse the membrane as a helical segment. The Extracellular segment spans residues 207–236 (ATVASGKIGKTELTGTVIGVDVTASEKVWK). A helical transmembrane segment spans residues 237-257 (LFQAIGDIAFSYAFTTILIEI). Over 258–276 (QDTLRSSPPENKVMKRASL) the chain is Cytoplasmic. A helical transmembrane segment spans residues 277-297 (VGVSTTTVFYILCGCIGYAAF). Topologically, residues 298 to 314 (GNQAPGDFLTDFGFYEP) are extracellular. The helical transmembrane segment at 315–335 (YWLIDFANACIALHLIGAYQV) threads the bilayer. The Cytoplasmic portion of the chain corresponds to 336-378 (YAQPFFQFVEENCNKKWPQSNFINKEYSSKVPLLGKCRVNLFR). Residues 379–398 (LVWRTCYVVLTTFVAMIFPF) form a helical membrane-spanning segment. Residues 399–401 (FNA) are Extracellular-facing. The chain crosses the membrane as a helical span at residues 402-424 (ILGLLGAFAFWPLTVYFPVAMHI). Topologically, residues 425–441 (AQAKVKKYSRRWLALNL) are cytoplasmic. Residues 442 to 462 (LVLVCLIVSALAAVGSIIGLI) traverse the membrane as a helical segment. Residues 463-475 (NSVKSYKPFKNLD) are Extracellular-facing.

This sequence belongs to the amino acid/polyamine transporter 2 family. Amino acid/auxin permease (AAAP) (TC 2.A.18.2) subfamily. Expressed in flower buds, siliques, developing seeds and funiculi.

Its subcellular location is the cell membrane. Amino acid-proton symporter. Stereospecific transporter with a broad specificity for glutamate, aspartate and neutral and acidic amino acids. The protein is Amino acid permease 8 (AAP8) of Arabidopsis thaliana (Mouse-ear cress).